Here is a 107-residue protein sequence, read N- to C-terminus: UPF0235 protein RPC_0058 (107 aa).

It belongs to the UPF0235 family.

The sequence is that of UPF0235 protein RPC_0058 from Rhodopseudomonas palustris (strain BisB18).